Here is a 183-residue protein sequence, read N- to C-terminus: Apo-citrate lyase phosphoribosyl-dephospho-CoA transferase (183 aa).

The protein belongs to the CitX family.

The enzyme catalyses apo-[citrate lyase ACP] + 2'-(5''-triphospho-alpha-D-ribosyl)-3'-dephospho-CoA = holo-[citrate lyase ACP] + diphosphate. Transfers 2-(5''-triphosphoribosyl)-3'-dephosphocoenzyme-A on a serine residue to the apo-acyl carrier protein (gamma chain) of the citrate lyase to yield holo-acyl carrier protein. The sequence is that of Apo-citrate lyase phosphoribosyl-dephospho-CoA transferase from Escherichia coli O6:K15:H31 (strain 536 / UPEC).